The primary structure comprises 962 residues: Protease 3 (962 aa).

An N-terminal signal peptide occupies residues 1 to 23; the sequence is MPRSTWFKALLLLVALWAPLSQA. Position 88 (histidine 88) interacts with Zn(2+). The active-site Proton acceptor is the glutamate 91. Residues histidine 92 and glutamate 169 each coordinate Zn(2+).

The protein belongs to the peptidase M16 family. In terms of assembly, monomer. Zn(2+) serves as cofactor.

The protein resides in the periplasm. The enzyme catalyses Preferential cleavage of 16-Tyr-|-Leu-17 and 25-Phe-|-Tyr-26 bonds of oxidized insulin B chain. Also acts on other substrates of Mw less than 7 kDa such as insulin and glucagon.. Its function is as follows. Endopeptidase that degrades small peptides of less than 7 kDa, such as glucagon and insulin. In Escherichia coli O157:H7, this protein is Protease 3 (ptrA).